The chain runs to 854 residues: Protein ROOT HAIR DEFECTIVE 3 homolog 1 (854 aa).

Over 1 to 680 (MDEAAAAEAV…QAHKRGNGRL (680 aa)) the chain is Cytoplasmic. The GB1/RHD3-type G domain occupies 37–252 (GLSYAVVSIM…IAPGGLAGDR (216 aa)). GTP is bound at residue 47-54 (GPQSSGKS). Residues 217–242 (ALPSFEEKEEQFREQVQQLRQRFSNS) adopt a coiled-coil conformation. A helical transmembrane segment spans residues 681-701 (PPPWAMVAIAVLGFNEIMTLL). The Lumenal segment spans residues 702–704 (RNP). A helical transmembrane segment spans residues 705 to 725 (IYLFLLFVGYLLVKALAVQLD). Over 726–854 (INREFQNGVV…NESNNAYSIV (129 aa)) the chain is Cytoplasmic. 2 stretches are compositionally biased toward low complexity: residues 758–781 (TEQQQQQGHHQDAAAEAPQQQQQP) and 814–828 (VSPSPSSSSSTVTSP). The interval 758–854 (TEQQQQQGHH…NESNNAYSIV (97 aa)) is disordered. The span at 842–854 (QPDNESNNAYSIV) shows a compositional bias: polar residues.

Belongs to the TRAFAC class dynamin-like GTPase superfamily. GB1/RHD3 GTPase family. RHD3 subfamily.

It localises to the endoplasmic reticulum membrane. Its function is as follows. Probable GTP-binding protein that may be involved in cell development. The chain is Protein ROOT HAIR DEFECTIVE 3 homolog 1 from Oryza sativa subsp. japonica (Rice).